We begin with the raw amino-acid sequence, 248 residues long: Ribosomal RNA small subunit methyltransferase J (248 aa).

S-adenosyl-L-methionine is bound by residues 101–102, 117–118, 153–154, and D171; these read RD, ER, and SS.

The protein belongs to the methyltransferase superfamily. RsmJ family.

The protein localises to the cytoplasm. It catalyses the reaction guanosine(1516) in 16S rRNA + S-adenosyl-L-methionine = N(2)-methylguanosine(1516) in 16S rRNA + S-adenosyl-L-homocysteine + H(+). Its function is as follows. Specifically methylates the guanosine in position 1516 of 16S rRNA. This is Ribosomal RNA small subunit methyltransferase J from Serratia proteamaculans (strain 568).